A 142-amino-acid polypeptide reads, in one-letter code: Large ribosomal subunit protein uL11 (142 aa).

In terms of assembly, part of the ribosomal stalk of the 50S ribosomal subunit. Interacts with L10 and the large rRNA to form the base of the stalk. L10 forms an elongated spine to which L12 dimers bind in a sequential fashion forming a multimeric L10(L12)X complex. In terms of processing, lys-40 is trimethylated or acetylated; other modifications may also exist.

Its function is as follows. Forms part of the ribosomal stalk which helps the ribosome interact with GTP-bound translation factors. The protein is Large ribosomal subunit protein uL11 of Rhodopseudomonas palustris (strain ATCC BAA-98 / CGA009).